Here is a 162-residue protein sequence, read N- to C-terminus: COP9 signalosome complex subunit 9 (162 aa).

Residues 6 to 118 enclose the PCI domain; it reads ETIKSLEDPY…SVSKSMKFSR (113 aa).

As to quaternary structure, component of a COP9 signalosome-like (CSN) complex, composed of at least RRI1/CSN5, CSN9, RRI2/CSN10, PCI8/CSN11, CSN12 and CSI1. In the complex, it probably interacts directly with CSN12 and CSI1. Also interacts with RPN5.

The protein resides in the cytoplasm. It localises to the nucleus. In terms of biological role, component of the COP9 signalosome (CSN) complex that acts as a regulator of the ubiquitin (Ubl) conjugation pathway by mediating the deneddylation of the cullin subunit of SCF-type E3 ubiquitin-protein ligase complexes. The CSN complex is involved in the regulation of the mating pheromone response. The protein is COP9 signalosome complex subunit 9 (CSN9) of Saccharomyces cerevisiae (strain ATCC 204508 / S288c) (Baker's yeast).